The following is a 347-amino-acid chain: Guanine nucleotide-binding protein subunit beta (347 aa).

WD repeat units lie at residues 60–90 (GHLA…LVWD), 102–132 (LRSS…SIYN), 148–177 (SHTG…ILWD), 189–219 (DHNG…KLWD), 231–261 (GHEA…RLFD), 275–305 (NILC…NVWD), and 317–347 (GHGN…KIWA).

It belongs to the WD repeat G protein beta family. As to quaternary structure, g proteins are composed of 3 units, alpha, beta and gamma. Interacts with gpgA, and this requires phlp1.

It is found in the cytoplasm. Its subcellular location is the cell membrane. In terms of biological role, guanine nucleotide-binding proteins (G proteins) are involved as a modulator or transducer in various transmembrane signaling systems. The beta and gamma chains are required for the GTPase activity, for replacement of GDP by GTP, and for G protein-effector interaction. Required for normal chemotaxis in response to cAMP and for aggregation during scorocarp development. This is Guanine nucleotide-binding protein subunit beta (gpbA) from Dictyostelium discoideum (Social amoeba).